A 307-amino-acid polypeptide reads, in one-letter code: Barttin (307 aa).

Residues 1–5 are Cytoplasmic-facing; sequence MADEK. Residues 1 to 72 are regulates channel membrane trafficking and anion conductance; that stretch reads MADEKTFRIG…VPADSDFQGI (72 aa). Residues 6 to 26 traverse the membrane as a helical segment; sequence TFRIGFIVLGLFLLSLGTFLM. Residues 27–32 lie on the Extracellular side of the membrane; that stretch reads SHDRPQ. A helical transmembrane segment spans residues 33–53; it reads VYGTFYAMGSVMVIGGVIWSM. Residues Cys54 and Cys56 are each lipidated (S-palmitoyl cysteine). Over 54 to 307 the chain is Cytoplasmic; sequence CQCYPKITFV…ELGFEPDIQG (254 aa). A phosphoserine mark is found at Ser79 and Ser107. Disordered regions lie at residues 135 to 154 and 161 to 224; these read TGASSVREGEPRTAQAWMEA and GSDE…RGPL. Over residues 161 to 171 the composition is skewed to basic and acidic residues; sequence GSDENEGEKSH. Residue Ser162 is modified to Phosphoserine. Residues 172 to 183 show a composition bias toward low complexity; that stretch reads SQSSPSVGPQGS. Positions 198 to 207 are enriched in polar residues; it reads SEGSSLQPSP. Ser228 and Ser289 each carry phosphoserine. A disordered region spans residues 255–307; sequence RKQQWSLRMKGETVQARAEEPEQEEEDLYYGLPDSPGNPLPDKELGFEPDIQG.

As to quaternary structure, interacts with CLCNK channels. Forms probably heteromers with CLCNKA in the thin ascending limb of Henle and with CLCNKB in the thick ascending limb and more distal segments. Palmitoylation is necessary for activation of plasma membrane-inserted CLC-K/barttin channels. In terms of tissue distribution, expression is evident in inner and outer stripes of the outer medulla of the kidney, most probably representing thin limbs of Henle's loop together with some collecting duct coursing through the outer stripe. In situ hybridization in fetal kidney at 18.5 dpc revealed a clear continuity between hybridization signals from the thin limb of Henle's loop and the distal convoluted tubule, suggesting that part of the expression pattern may result from expression in the thick ascending limb of Henle's loop. In addition, strong signals are present in a subset of cortical tubules, representing distal convoluted tubules or cortical collecting duct. Strong expression is also observed in the inner medulla of the kidney. This expression does not extend all the way to the tip of the papilla. Thus this signal most probably represents cells of the thin ascending limbs. In the inner ear, strong and exclusive expression is detected in marginal cells of the stria vascularis. In addition to cochlear signal, expression is observed in dark cells localized at the base of the crista ampullaris of the vestibular organ.

The protein localises to the basolateral cell membrane. In terms of biological role, regulatory subunit of anion-selective CLCNKA:BSND and CLCNKB:BSND heteromeric channels involved in basolateral chloride conductance along the nephron to achieve urine concentration and maintain systemic acid-base homeostasis, and in the stria vascularis of the inner ear to establish the endocochlear potential necessary for normal hearing. Most likely acts as a chaperone that allosterically regulates proper sorting of CLCNKA:BSND and CLCNKB:BSND channels at the basolateral plasma membrane domain and functional switch to ion conducting state. Mediates constitutive opening of channel common gates. This is Barttin from Mus musculus (Mouse).